The primary structure comprises 138 residues: Small ribosomal subunit protein uS11c (138 aa).

Residues 1 to 22 (MAKAIPKISSRRNGRIGSRKGA) form a disordered region. Positions 9–22 (SSRRNGRIGSRKGA) are enriched in basic residues.

The protein belongs to the universal ribosomal protein uS11 family. As to quaternary structure, part of the 30S ribosomal subunit.

It is found in the plastid. The protein resides in the chloroplast. The sequence is that of Small ribosomal subunit protein uS11c from Nicotiana tabacum (Common tobacco).